Reading from the N-terminus, the 295-residue chain is Taste receptor type 2 member 120 (295 aa).

Residues 1–5 are Extracellular-facing; the sequence is MNLVE. Residues 6-26 traverse the membrane as a helical segment; that stretch reads WIVTIIMMTEFLLGNCANVFI. Over 27–45 the chain is Cytoplasmic; sequence TIVNFIDCVKRRKISSADR. Residues 46–66 traverse the membrane as a helical segment; that stretch reads IITAIAIFRIGLLWAMLTNWH. Residues 67–80 are Extracellular-facing; it reads SHVFTPDTDNLQMR. Residues 81–101 form a helical membrane-spanning segment; sequence VFGGITWAITNHFTTWLGTIL. Over 102-127 the chain is Cytoplasmic; it reads SMFYLFKIANFSNSLFLHLKRKLDNV. Residues 128-148 traverse the membrane as a helical segment; it reads LLVIFLGSSLFLVAYLGMVNI. Over 149–177 the chain is Extracellular; it reads KKIAWMSIHEGNVTTKSKLKHVTSITNML. The N-linked (GlcNAc...) asparagine glycan is linked to asparagine 160. A helical membrane pass occupies residues 178–198; sequence LFSLINIVPFGISLNCVLLLI. The Cytoplasmic portion of the chain corresponds to 199 to 228; it reads YSLSKHLKNMKFYGKGCQDQSTMVHIKALQ. Residues 229–249 form a helical membrane-spanning segment; it reads TVVSFLLLYATYSSCVIISGW. The Extracellular portion of the chain corresponds to 250–255; it reads SLQNAP. The helical transmembrane segment at 256-276 threads the bilayer; sequence VFLFCVTIGSFYPAGHSCILI. Topologically, residues 277–295 are cytoplasmic; it reads WGNQKLKQVFLLLLRQMRC.

The protein belongs to the G-protein coupled receptor T2R family.

The protein resides in the membrane. Functionally, putative taste receptor which may play a role in the perception of bitterness. This is Taste receptor type 2 member 120 from Mus musculus (Mouse).